The sequence spans 93 residues: Acylphosphatase (93 aa).

Residues 5–93 enclose the Acylphosphatase-like domain; it reads AKQIVVRGRV…PNFRGFQVTG (89 aa). Active-site residues include Arg20 and Asn38.

Belongs to the acylphosphatase family.

It carries out the reaction an acyl phosphate + H2O = a carboxylate + phosphate + H(+). This is Acylphosphatase (acyP) from Lacticaseibacillus paracasei (strain ATCC 334 / BCRC 17002 / CCUG 31169 / CIP 107868 / KCTC 3260 / NRRL B-441) (Lactobacillus paracasei).